The sequence spans 107 residues: Pyrimidine/purine nucleoside phosphorylase (107 aa).

Belongs to the nucleoside phosphorylase PpnP family.

It catalyses the reaction a purine D-ribonucleoside + phosphate = a purine nucleobase + alpha-D-ribose 1-phosphate. The catalysed reaction is adenosine + phosphate = alpha-D-ribose 1-phosphate + adenine. It carries out the reaction cytidine + phosphate = cytosine + alpha-D-ribose 1-phosphate. The enzyme catalyses guanosine + phosphate = alpha-D-ribose 1-phosphate + guanine. It catalyses the reaction inosine + phosphate = alpha-D-ribose 1-phosphate + hypoxanthine. The catalysed reaction is thymidine + phosphate = 2-deoxy-alpha-D-ribose 1-phosphate + thymine. It carries out the reaction uridine + phosphate = alpha-D-ribose 1-phosphate + uracil. The enzyme catalyses xanthosine + phosphate = alpha-D-ribose 1-phosphate + xanthine. Catalyzes the phosphorolysis of diverse nucleosides, yielding D-ribose 1-phosphate and the respective free bases. Can use uridine, adenosine, guanosine, cytidine, thymidine, inosine and xanthosine as substrates. Also catalyzes the reverse reactions. In Azoarcus sp. (strain BH72), this protein is Pyrimidine/purine nucleoside phosphorylase.